Here is a 424-residue protein sequence, read N- to C-terminus: Ornithine aminotransferase (424 aa).

At Lys272 the chain carries N6-(pyridoxal phosphate)lysine. Residue Lys390 forms a Glycyl lysine isopeptide (Lys-Gly) (interchain with G-Cter in ubiquitin) linkage.

This sequence belongs to the class-III pyridoxal-phosphate-dependent aminotransferase family. The cofactor is pyridoxal 5'-phosphate.

Its subcellular location is the cytoplasm. It catalyses the reaction a 2-oxocarboxylate + L-ornithine = L-glutamate 5-semialdehyde + an L-alpha-amino acid. The protein operates within amino-acid biosynthesis; L-proline biosynthesis; L-glutamate 5-semialdehyde from L-ornithine: step 1/1. Its activity is regulated as follows. By arginine and urea. In terms of biological role, catalyzes the transamination of ornithine into L-glutamate gamma-semialdehyde, the second step of arginine degradation. This Saccharomyces cerevisiae (strain ATCC 204508 / S288c) (Baker's yeast) protein is Ornithine aminotransferase (CAR2).